We begin with the raw amino-acid sequence, 265 residues long: Glutamate racemase (265 aa).

Residues 10-11 (DS) and 42-43 (YG) contribute to the substrate site. The Proton donor/acceptor role is filled by cysteine 73. A substrate-binding site is contributed by 74-75 (NT). The active-site Proton donor/acceptor is cysteine 180. Residue 181-182 (TH) coordinates substrate.

It belongs to the aspartate/glutamate racemases family.

The enzyme catalyses L-glutamate = D-glutamate. Its pathway is cell wall biogenesis; peptidoglycan biosynthesis. Provides the (R)-glutamate required for cell wall biosynthesis. This Synechococcus sp. (strain CC9605) protein is Glutamate racemase.